A 346-amino-acid polypeptide reads, in one-letter code: Small ribosomal subunit biogenesis GTPase RsgA (346 aa).

Positions 1-26 are disordered; sequence MAKRKLTQNQTRRIQSNNAKTLHRHK. A compositionally biased stretch (polar residues) spans 7 to 20; the sequence is TQNQTRRIQSNNAK. The region spanning 103–271 is the CP-type G domain; that stretch reads ENEISRPDYY…LIDSPGIREF (169 aa). Residues 159 to 162 and 213 to 221 each bind GTP; these read NKVD and GQSGVGKSS. Zn(2+)-binding residues include C295, C300, H302, and C308.

Belongs to the TRAFAC class YlqF/YawG GTPase family. RsgA subfamily. In terms of assembly, monomer. Associates with 30S ribosomal subunit, binds 16S rRNA. The cofactor is Zn(2+).

The protein localises to the cytoplasm. Its function is as follows. One of several proteins that assist in the late maturation steps of the functional core of the 30S ribosomal subunit. Helps release RbfA from mature subunits. May play a role in the assembly of ribosomal proteins into the subunit. Circularly permuted GTPase that catalyzes slow GTP hydrolysis, GTPase activity is stimulated by the 30S ribosomal subunit. The sequence is that of Small ribosomal subunit biogenesis GTPase RsgA from Haemophilus influenzae (strain PittEE).